The chain runs to 592 residues: Dictomallein-1 (592 aa).

Positions 1-19 are cleaved as a signal peptide; the sequence is MKILIILLVFLNLITNINC. In terms of domain architecture, Peptidase M66 spans 140–402; that stretch reads PNIGHETNLN…QNYFKDSIIY (263 aa). Histidine 294 contributes to the Zn(2+) binding site. Residue glutamate 295 is part of the active site. Residues histidine 298 and histidine 304 each coordinate Zn(2+).

The protein belongs to the dictomallein family. It depends on Zn(2+) as a cofactor.

The protein localises to the secreted. The sequence is that of Dictomallein-1 (dtmlA) from Dictyostelium discoideum (Social amoeba).